Consider the following 78-residue polypeptide: Exodeoxyribonuclease 7 small subunit (78 aa).

Belongs to the XseB family. As to quaternary structure, heterooligomer composed of large and small subunits.

It localises to the cytoplasm. It catalyses the reaction Exonucleolytic cleavage in either 5'- to 3'- or 3'- to 5'-direction to yield nucleoside 5'-phosphates.. In terms of biological role, bidirectionally degrades single-stranded DNA into large acid-insoluble oligonucleotides, which are then degraded further into small acid-soluble oligonucleotides. The polypeptide is Exodeoxyribonuclease 7 small subunit (Synechococcus sp. (strain JA-2-3B'a(2-13)) (Cyanobacteria bacterium Yellowstone B-Prime)).